The following is a 712-amino-acid chain: Aryl hydrocarbon receptor nuclear translocator 2 (712 aa).

Residues 36–73 (AGAMPARGGKRRSGMDFDDEDGEGPSKFSRENHSEIER) are disordered. Arg-42 bears the Omega-N-methylarginine mark. Residues 63 to 73 (FSRENHSEIER) are compositionally biased toward basic and acidic residues. In terms of domain architecture, bHLH spans 63-116 (FSRENHSEIERRRRNKMTQYITELSDMVPTCSALARKPDKLTILRMAVSHMKSM). PAS domains lie at 134–209 (TEQE…MTGR) and 323–393 (PVCM…VKLK). One can recognise a PAC domain in the interval 398–441 (SVMYRFRTKNREWLLIRTSSFTFQNPYSDEIEYVICTNTNVKQL). The interval 573–712 (AWTGSRPPFP…DLGMFPPFSE (140 aa)) is disordered. Low complexity-rich tracts occupy residues 597 to 626 (SSHP…AYPS) and 653 to 675 (SQWQ…QPGQ).

Efficient DNA binding requires dimerization with another bHLH protein. Heterodimer with NPAS4 or SIM1. Heterodimer with the aryl hydrocarbon receptor (AHR) or the SIM1 protein. Interacts with TACC3. In terms of tissue distribution, restricted to adult brain and kidney.

It localises to the nucleus. Functionally, transcription factor that plays a role in the development of the hypothalamo-pituitary axis, postnatal brain growth, and visual and renal function. Specifically recognizes the xenobiotic response element (XRE). The protein is Aryl hydrocarbon receptor nuclear translocator 2 (Arnt2) of Mus musculus (Mouse).